The sequence spans 51 residues: UPF0181 protein VV2_0310 (51 aa).

The protein belongs to the UPF0181 family.

The chain is UPF0181 protein VV2_0310 from Vibrio vulnificus (strain CMCP6).